The primary structure comprises 346 residues: Holliday junction branch migration complex subunit RuvB (346 aa).

Residues 1–181 are large ATPase domain (RuvB-L); that stretch reads MSDRNPLIDA…FGIPVRLNFY (181 aa). ATP-binding positions include Leu20, Arg21, Gly62, Lys65, Thr66, Thr67, 128–130, Arg171, Tyr181, and Arg218; that span reads EDF. Position 66 (Thr66) interacts with Mg(2+). The interval 182–252 is small ATPAse domain (RuvB-S); the sequence is TVEELEYIVR…IADEALSRLE (71 aa). Residues 255–346 form a head domain (RuvB-H) region; the sequence is NRGLDQLDRR…SQYGLFMEDE (92 aa). DNA-binding residues include Arg291, Arg310, and Arg315.

The protein belongs to the RuvB family. As to quaternary structure, homohexamer. Forms an RuvA(8)-RuvB(12)-Holliday junction (HJ) complex. HJ DNA is sandwiched between 2 RuvA tetramers; dsDNA enters through RuvA and exits via RuvB. An RuvB hexamer assembles on each DNA strand where it exits the tetramer. Each RuvB hexamer is contacted by two RuvA subunits (via domain III) on 2 adjacent RuvB subunits; this complex drives branch migration. In the full resolvosome a probable DNA-RuvA(4)-RuvB(12)-RuvC(2) complex forms which resolves the HJ.

It is found in the cytoplasm. It carries out the reaction ATP + H2O = ADP + phosphate + H(+). Functionally, the RuvA-RuvB-RuvC complex processes Holliday junction (HJ) DNA during genetic recombination and DNA repair, while the RuvA-RuvB complex plays an important role in the rescue of blocked DNA replication forks via replication fork reversal (RFR). RuvA specifically binds to HJ cruciform DNA, conferring on it an open structure. The RuvB hexamer acts as an ATP-dependent pump, pulling dsDNA into and through the RuvAB complex. RuvB forms 2 homohexamers on either side of HJ DNA bound by 1 or 2 RuvA tetramers; 4 subunits per hexamer contact DNA at a time. Coordinated motions by a converter formed by DNA-disengaged RuvB subunits stimulates ATP hydrolysis and nucleotide exchange. Immobilization of the converter enables RuvB to convert the ATP-contained energy into a lever motion, pulling 2 nucleotides of DNA out of the RuvA tetramer per ATP hydrolyzed, thus driving DNA branch migration. The RuvB motors rotate together with the DNA substrate, which together with the progressing nucleotide cycle form the mechanistic basis for DNA recombination by continuous HJ branch migration. Branch migration allows RuvC to scan DNA until it finds its consensus sequence, where it cleaves and resolves cruciform DNA. This chain is Holliday junction branch migration complex subunit RuvB, found in Brucella melitensis biotype 2 (strain ATCC 23457).